A 411-amino-acid polypeptide reads, in one-letter code: Dihydrolipoyllysine-residue succinyltransferase component of 2-oxoglutarate dehydrogenase complex (411 aa).

One can recognise a Lipoyl-binding domain in the interval 2–77 (TTEIRVPTLG…EVNALLGAVE (76 aa)). At Lys-43 the chain carries N6-lipoyllysine. Low complexity predominate over residues 82-100 (SVAKSPSSSETSVSAAPSE). Positions 82–115 (SVAKSPSSSETSVSAAPSELEQSSSSNTMPPAPS) are disordered. Residues 101–110 (LEQSSSSNTM) show a composition bias toward polar residues. The Peripheral subunit-binding (PSBD) domain occupies 111-148 (PPAPSAAKLMAENNIAKSDILGSGKRGQILKEDVLNVL). Residues His-382 and Asp-386 contribute to the active site.

Belongs to the 2-oxoacid dehydrogenase family. Forms a 24-polypeptide structural core with octahedral symmetry. Part of the 2-oxoglutarate dehydrogenase (OGDH) complex composed of E1 (2-oxoglutarate dehydrogenase), E2 (dihydrolipoamide succinyltransferase) and E3 (dihydrolipoamide dehydrogenase); the complex contains multiple copies of the three enzymatic components (E1, E2 and E3). Requires (R)-lipoate as cofactor.

The catalysed reaction is N(6)-[(R)-dihydrolipoyl]-L-lysyl-[protein] + succinyl-CoA = N(6)-[(R)-S(8)-succinyldihydrolipoyl]-L-lysyl-[protein] + CoA. Its pathway is amino-acid degradation; L-lysine degradation via saccharopine pathway; glutaryl-CoA from L-lysine: step 6/6. E2 component of the 2-oxoglutarate dehydrogenase (OGDH) complex which catalyzes the second step in the conversion of 2-oxoglutarate to succinyl-CoA and CO(2). This chain is Dihydrolipoyllysine-residue succinyltransferase component of 2-oxoglutarate dehydrogenase complex (sucB), found in Bartonella vinsonii subsp. berkhoffii.